Here is a 576-residue protein sequence, read N- to C-terminus: Eukaryotic translation initiation factor 3 subunit D (576 aa).

A disordered region spans residues 103-176 (DSTKTRFGRG…KDYDKPQRNR (74 aa)). Residues 110–122 (GRGGLARGRGQRG) show a composition bias toward gly residues. Basic and acidic residues predominate over residues 165–176 (GWKDYDKPQRNR). The segment at 304 to 318 (TLDMVTVNENAADAP) is RNA gate.

This sequence belongs to the eIF-3 subunit D family. As to quaternary structure, component of the eukaryotic translation initiation factor 3 (eIF-3) complex.

It localises to the cytoplasm. In terms of biological role, mRNA cap-binding component of the eukaryotic translation initiation factor 3 (eIF-3) complex, which is involved in protein synthesis of a specialized repertoire of mRNAs and, together with other initiation factors, stimulates binding of mRNA and methionyl-tRNAi to the 40S ribosome. The eIF-3 complex specifically targets and initiates translation of a subset of mRNAs involved in cell proliferation. In the eIF-3 complex, eif3d specifically recognizes and binds the 7-methylguanosine cap of a subset of mRNAs. This chain is Eukaryotic translation initiation factor 3 subunit D, found in Botryotinia fuckeliana (strain B05.10) (Noble rot fungus).